The primary structure comprises 70 residues: Conotoxin Vc6.10 (70 aa).

A signal peptide spans 1–19 (MEKLTILLLVAAVLTSTQA). A propeptide spanning residues 20 to 40 (LIQGGADERQKAKINFLSRSD) is cleaved from the precursor. Cystine bridges form between C43/C57, C50/C62, and C56/C69.

This sequence belongs to the conotoxin O2 superfamily. In terms of tissue distribution, expressed by the venom duct.

The protein localises to the secreted. In terms of biological role, inhibits voltage-gated ion channels. This chain is Conotoxin Vc6.10, found in Conus victoriae (Queen Victoria cone).